A 626-amino-acid polypeptide reads, in one-letter code: UvrABC system protein C (626 aa).

A GIY-YIG domain is found at 20–97; the sequence is ECSGVYKMLD…IKKFQPKFNI (78 aa). The region spanning 207-242 is the UVR domain; the sequence is RELQENLSKKMQELSSQMRFEEAAEIRDRIKALSYV.

This sequence belongs to the UvrC family. In terms of assembly, interacts with UvrB in an incision complex.

It localises to the cytoplasm. Functionally, the UvrABC repair system catalyzes the recognition and processing of DNA lesions. UvrC both incises the 5' and 3' sides of the lesion. The N-terminal half is responsible for the 3' incision and the C-terminal half is responsible for the 5' incision. The chain is UvrABC system protein C from Rickettsia typhi (strain ATCC VR-144 / Wilmington).